The sequence spans 415 residues: Membrane-bound ghrelin O-acyltransferase mboat4 (415 aa).

At 1–6 (MIDLLW) the chain is on the lumenal side. A helical membrane pass occupies residues 7 to 28 (ISSDGHPQLFYQFINIPFAFLF). The Cytoplasmic segment spans residues 29-42 (HCLSSQGHLSIINR). The chain crosses the membrane as a helical span at residues 43–58 (YVYLAMGGFMLAIATM). The Lumenal portion of the chain corresponds to 59–61 (GPY). The helical transmembrane segment at 62–78 (SSLLFLSAIKLLLLIHY) threads the bilayer. At 79-84 (IHPMHL) the chain is on the cytoplasmic side. A helical membrane pass occupies residues 85–103 (HRWILGLQMCWQTCWHLYV). Residues 104 to 122 (QYQIYWLQEAPDSRLLLAI) are Lumenal-facing. The chain crosses the membrane as a helical span at residues 123–138 (SALMLMTQRISSLSLD). The Cytoplasmic segment spans residues 139–193 (FQEGTISNQSILIPFLTYSLYFPALLGGPLCSFNAFVQSVERQHTSMTSYLGNLT). Residues 194 to 214 (SKISQVIVLVWIKQLFSELLK) form a helical membrane-spanning segment. Residues 215–227 (SATFNIDSVCLDV) lie on the Lumenal side of the membrane. A helical membrane pass occupies residues 228–247 (LWIWIFSLTLRLNYYAHWKM). Over 248 to 312 (SECVNNAAGL…RKIVFNRTSR (65 aa)) the chain is Cytoplasmic. Residues Asn-295 and His-326 contribute to the active site. The chain crosses the membrane as a helical span at residues 313–326 (SPLFMTFGFSALWH). At 327-328 (GL) the chain is on the lumenal side. The helical transmembrane segment at 329–345 (HPGQILGFLIWAVTVQA) threads the bilayer. The Cytoplasmic portion of the chain corresponds to 346–364 (DYKLHRFSHPKLNSLWRKR). Residues 365 to 385 (LYVCVNWAFTQLTVACVVVCV) form a helical membrane-spanning segment. Residues 386–394 (ELQSLASVK) lie on the Lumenal side of the membrane. The helical transmembrane segment at 395 to 415 (LLWSSCIAVFPLLSALILIIL) threads the bilayer.

The protein belongs to the membrane-bound acyltransferase family. Monomer. Not glycosylated.

Its subcellular location is the endoplasmic reticulum membrane. It carries out the reaction octanoyl-CoA + L-seryl-[protein] = O-octanoyl-L-seryl-[protein] + CoA. The catalysed reaction is decanoyl-CoA + L-seryl-[protein] = O-decanoyl-L-seryl-[protein] + CoA. It catalyses the reaction L-seryl-[protein] + acetyl-CoA = O-acetyl-L-seryl-[protein] + CoA. The enzyme catalyses L-seryl-[protein] + butanoyl-CoA = O-butanoyl-L-seryl-[protein] + CoA. It carries out the reaction pentanoyl-CoA + L-seryl-[protein] = O-pentanoyl-L-seryl-[protein] + CoA. The catalysed reaction is hexanoyl-CoA + L-seryl-[protein] = O-hexanoyl-L-seryl-[protein] + CoA. It catalyses the reaction heptanoyl-CoA + L-seryl-[protein] = O-heptanoyl-L-seryl-[protein] + CoA. The enzyme catalyses nonanoyl-CoA + L-seryl-[protein] = O-nonanoyl-L-seryl-[protein] + CoA. It carries out the reaction L-seryl-[protein] + dodecanoyl-CoA = O-dodecanoyl-L-seryl-[protein] + CoA. The catalysed reaction is L-seryl-[protein] + tetradecanoyl-CoA = O-tetradecanoyl-L-seryl-[protein] + CoA. It catalyses the reaction a fatty acyl-CoA + L-seryl-[protein] = O-fatty acyl-L-seryl-[protein] + CoA. Catalyzes ghrelin acylation at 'Ser-3' using preferentially octanoyl-CoA, hexanoyl-CoA and decanoyl-CoA as acyl-CoA donors leading to ghrelin activity. In vitro uses also acyl-CoA donors of different lengths from short-chain (C2) to long-chain fatty acids (C16) knowing that acyl-CoA donors from butanoyl-CoA (C4) to dodecanoyl-CoA (C12) are more efficient compared to longer acyl-CoA donors, such as myristoyl-CoA (C14) and palmitoyl-CoA (C16) that are not efficient. The chain is Membrane-bound ghrelin O-acyltransferase mboat4 from Danio rerio (Zebrafish).